A 348-amino-acid polypeptide reads, in one-letter code: Serpentine receptor class beta-7 (348 aa).

The next 7 membrane-spanning stretches (helical) occupy residues Gln-31–Leu-51, Leu-63–Ile-83, Gly-107–Phe-127, Phe-145–Ile-165, Met-191–Leu-211, Ile-241–Leu-261, and Gly-280–Phe-300.

It belongs to the nematode receptor-like protein srb family.

The protein resides in the membrane. In Caenorhabditis elegans, this protein is Serpentine receptor class beta-7 (srb-7).